The primary structure comprises 276 residues: Small ribosomal subunit protein uS2 (276 aa).

Residues 251–276 (AEEAPAAAEEAPAAEPAAEETPAAEA) form a disordered region. Residues 252–276 (EEAPAAAEEAPAAEPAAEETPAAEA) show a composition bias toward low complexity.

The protein belongs to the universal ribosomal protein uS2 family.

This chain is Small ribosomal subunit protein uS2, found in Jannaschia sp. (strain CCS1).